The primary structure comprises 438 residues: Thymidine phosphorylase (438 aa).

It belongs to the thymidine/pyrimidine-nucleoside phosphorylase family. Homodimer.

The catalysed reaction is thymidine + phosphate = 2-deoxy-alpha-D-ribose 1-phosphate + thymine. Its pathway is pyrimidine metabolism; dTMP biosynthesis via salvage pathway; dTMP from thymine: step 1/2. In terms of biological role, the enzymes which catalyze the reversible phosphorolysis of pyrimidine nucleosides are involved in the degradation of these compounds and in their utilization as carbon and energy sources, or in the rescue of pyrimidine bases for nucleotide synthesis. The sequence is that of Thymidine phosphorylase from Burkholderia orbicola (strain AU 1054).